Here is a 394-residue protein sequence, read N- to C-terminus: NAD(P)H-quinone oxidoreductase subunit H (394 aa).

It belongs to the complex I 49 kDa subunit family. In terms of assembly, NDH-1 can be composed of about 15 different subunits; different subcomplexes with different compositions have been identified which probably have different functions.

Its subcellular location is the cellular thylakoid membrane. The enzyme catalyses a plastoquinone + NADH + (n+1) H(+)(in) = a plastoquinol + NAD(+) + n H(+)(out). It carries out the reaction a plastoquinone + NADPH + (n+1) H(+)(in) = a plastoquinol + NADP(+) + n H(+)(out). Its function is as follows. NDH-1 shuttles electrons from an unknown electron donor, via FMN and iron-sulfur (Fe-S) centers, to quinones in the respiratory and/or the photosynthetic chain. The immediate electron acceptor for the enzyme in this species is believed to be plastoquinone. Couples the redox reaction to proton translocation, and thus conserves the redox energy in a proton gradient. Cyanobacterial NDH-1 also plays a role in inorganic carbon-concentration. This Prochlorococcus marinus (strain SARG / CCMP1375 / SS120) protein is NAD(P)H-quinone oxidoreductase subunit H.